We begin with the raw amino-acid sequence, 246 residues long: uncharacterized protein (246 aa).

The next 6 helical transmembrane spans lie at 7–27 (KVTL…ALII), 50–70 (LNIL…SMEF), 99–119 (VSFY…LLFF), 135–155 (LALI…GLLC), 163–183 (AVAV…VQLM), and 219–239 (FSIG…WWCF).

The protein resides in the cell membrane. This is an uncharacterized protein from Bacillus subtilis (strain 168).